We begin with the raw amino-acid sequence, 754 residues long: Photosystem I P700 chlorophyll a apoprotein A1 (754 aa).

8 consecutive transmembrane segments (helical) span residues 72–95 (IFSA…FHGA), 158–181 (LYCT…FHYH), 197–221 (MNHH…HVSL), 293–311 (TAHH…GHMY), 351–374 (WHAQ…HHMY), 390–416 (LSLF…IFMV), 438–460 (AIIS…LYIH), and 535–553 (FMVH…LILL). [4Fe-4S] cluster-binding residues include cysteine 577 and cysteine 586. 2 helical membrane passes run 593 to 614 (HVFL…HFSW) and 668 to 690 (LSAY…MFLF). Histidine 679 contacts chlorophyll a'. The chlorophyll a site is built by methionine 687 and tyrosine 695. Tryptophan 696 serves as a coordination point for phylloquinone. Residues 728–748 (AVGVAHYLLGGIVTTWAFFLA) traverse the membrane as a helical segment.

Belongs to the PsaA/PsaB family. The PsaA/B heterodimer binds the P700 chlorophyll special pair and subsequent electron acceptors. PSI consists of a core antenna complex that captures photons, and an electron transfer chain that converts photonic excitation into a charge separation. The cyanobacterial PSI reaction center is composed of one copy each of PsaA,B,C,D,E,F,I,J,K,L,M and X, and forms trimeric complexes. PSI electron transfer chain: 5 chlorophyll a, 1 chlorophyll a', 2 phylloquinones and 3 4Fe-4S clusters. PSI core antenna: 90 chlorophyll a, 22 carotenoids, 3 phospholipids and 1 galactolipid. P700 is a chlorophyll a/chlorophyll a' dimer, A0 is one or more chlorophyll a, A1 is one or both phylloquinones and FX is a shared 4Fe-4S iron-sulfur center. is required as a cofactor.

The protein resides in the cellular thylakoid membrane. The catalysed reaction is reduced [plastocyanin] + hnu + oxidized [2Fe-2S]-[ferredoxin] = oxidized [plastocyanin] + reduced [2Fe-2S]-[ferredoxin]. In terms of biological role, psaA and PsaB bind P700, the primary electron donor of photosystem I (PSI), as well as the electron acceptors A0, A1 and FX. PSI is a plastocyanin/cytochrome c6-ferredoxin oxidoreductase, converting photonic excitation into a charge separation, which transfers an electron from the donor P700 chlorophyll pair to the spectroscopically characterized acceptors A0, A1, FX, FA and FB in turn. Oxidized P700 is reduced on the lumenal side of the thylakoid membrane by plastocyanin or cytochrome c6. The polypeptide is Photosystem I P700 chlorophyll a apoprotein A1 (Rippkaea orientalis (strain PCC 8801 / RF-1) (Cyanothece sp. (strain PCC 8801))).